The sequence spans 423 residues: UDP-N-acetylglucosamine 1-carboxyvinyltransferase 1 (423 aa).

23-24 (KN) provides a ligand contact to phosphoenolpyruvate. Arg-96 provides a ligand contact to UDP-N-acetyl-alpha-D-glucosamine. The Proton donor role is filled by Cys-120. Cys-120 is subject to 2-(S-cysteinyl)pyruvic acid O-phosphothioketal. UDP-N-acetyl-alpha-D-glucosamine is bound by residues 125 to 129 (RPIDL), Asp-309, and Val-331.

It belongs to the EPSP synthase family. MurA subfamily.

The protein resides in the cytoplasm. It catalyses the reaction phosphoenolpyruvate + UDP-N-acetyl-alpha-D-glucosamine = UDP-N-acetyl-3-O-(1-carboxyvinyl)-alpha-D-glucosamine + phosphate. It participates in cell wall biogenesis; peptidoglycan biosynthesis. Its function is as follows. Cell wall formation. Adds enolpyruvyl to UDP-N-acetylglucosamine. This is UDP-N-acetylglucosamine 1-carboxyvinyltransferase 1 from Streptococcus mutans serotype c (strain ATCC 700610 / UA159).